The following is a 613-amino-acid chain: Dihydroxy-acid dehydratase (613 aa).

D81 is a Mg(2+) binding site. C122 lines the [2Fe-2S] cluster pocket. Mg(2+) contacts are provided by D123 and K124. Position 124 is an N6-carboxylysine (K124). Position 193 (C193) interacts with [2Fe-2S] cluster. Position 489 (E489) interacts with Mg(2+). The active-site Proton acceptor is the S515.

It belongs to the IlvD/Edd family. In terms of assembly, homodimer. The cofactor is [2Fe-2S] cluster. Requires Mg(2+) as cofactor.

The catalysed reaction is (2R)-2,3-dihydroxy-3-methylbutanoate = 3-methyl-2-oxobutanoate + H2O. It catalyses the reaction (2R,3R)-2,3-dihydroxy-3-methylpentanoate = (S)-3-methyl-2-oxopentanoate + H2O. The protein operates within amino-acid biosynthesis; L-isoleucine biosynthesis; L-isoleucine from 2-oxobutanoate: step 3/4. Its pathway is amino-acid biosynthesis; L-valine biosynthesis; L-valine from pyruvate: step 3/4. In terms of biological role, functions in the biosynthesis of branched-chain amino acids. Catalyzes the dehydration of (2R,3R)-2,3-dihydroxy-3-methylpentanoate (2,3-dihydroxy-3-methylvalerate) into 2-oxo-3-methylpentanoate (2-oxo-3-methylvalerate) and of (2R)-2,3-dihydroxy-3-methylbutanoate (2,3-dihydroxyisovalerate) into 2-oxo-3-methylbutanoate (2-oxoisovalerate), the penultimate precursor to L-isoleucine and L-valine, respectively. The protein is Dihydroxy-acid dehydratase of Pseudomonas fluorescens (strain Pf0-1).